The sequence spans 465 residues: Flavin-containing monooxygenase FMO GS-OX-like 2 (465 aa).

An FAD-binding site is contributed by 18–23 (GAGAAG). 217 to 222 (GSSASG) contributes to the NADP(+) binding site.

Belongs to the FMO family. Requires FAD as cofactor.

Functionally, catalyzes the conversion of methylthioalkyl glucosinolates of any chain length into methylsulfinylalkyl glucosinolates. In Arabidopsis thaliana (Mouse-ear cress), this protein is Flavin-containing monooxygenase FMO GS-OX-like 2.